Reading from the N-terminus, the 318-residue chain is Ribokinase (318 aa).

Residues 11–13 (NTD), 41–45 (GKGAN), and E146 each bind substrate. ATP is bound by residues N190 and 229 to 234 (TLGSQG). K(+) is bound by residues D256 and T258. 261-262 (GD) provides a ligand contact to ATP. Residue D262 participates in substrate binding. The active-site Proton acceptor is the D262. K(+)-binding residues include T292, R295, G297, and S301.

It belongs to the carbohydrate kinase PfkB family. Ribokinase subfamily. As to quaternary structure, homodimer. The cofactor is Mg(2+).

Its subcellular location is the cytoplasm. The protein resides in the nucleus. The enzyme catalyses D-ribose + ATP = D-ribose 5-phosphate + ADP + H(+). Its pathway is carbohydrate metabolism; D-ribose degradation; D-ribose 5-phosphate from beta-D-ribopyranose: step 2/2. Its activity is regulated as follows. Activated by a monovalent cation that binds near, but not in, the active site. The most likely occupant of the site in vivo is potassium. Ion binding induces a conformational change that may alter substrate affinity. Its function is as follows. Catalyzes the phosphorylation of ribose at O-5 in a reaction requiring ATP and magnesium. The resulting D-ribose-5-phosphate can then be used either for sythesis of nucleotides, histidine, and tryptophan, or as a component of the pentose phosphate pathway. This chain is Ribokinase, found in Schizosaccharomyces pombe (strain 972 / ATCC 24843) (Fission yeast).